A 461-amino-acid polypeptide reads, in one-letter code: Alpha-tubulin N-acetyltransferase 1 (461 aa).

Residues V2 to F189 form the N-acetyltransferase domain. Acetyl-CoA-binding positions include F123 to K136 and S159 to K168. 3 disordered regions span residues N196–D295, N314–A362, and R418–G443. Polar residues predominate over residues R233–P254. Residues G283–N293 show a composition bias toward low complexity. Acidic residues predominate over residues P318–P336. Positions I339–V356 are enriched in pro residues. Residues S426–S439 show a composition bias toward polar residues.

It belongs to the acetyltransferase ATAT1 family.

It carries out the reaction L-lysyl-[alpha-tubulin] + acetyl-CoA = N(6)-acetyl-L-lysyl-[alpha-tubulin] + CoA + H(+). In terms of biological role, specifically acetylates 'Lys-40' in alpha-tubulin on the lumenal side of microtubules. Promotes microtubule destabilization and accelerates microtubule dynamics; this activity may be independent of acetylation activity. Acetylates alpha-tubulin with a slow enzymatic rate, due to a catalytic site that is not optimized for acetyl transfer. Enters the microtubule through each end and diffuses quickly throughout the lumen of microtubules. Acetylates only long/old microtubules because of its slow acetylation rate since it does not have time to act on dynamically unstable microtubules before the enzyme is released. Acetylates central spindle microtubules. This Drosophila melanogaster (Fruit fly) protein is Alpha-tubulin N-acetyltransferase 1.